The following is a 192-amino-acid chain: Aminodeoxychorismate synthase component 2 (192 aa).

The 190-residue stretch at 3-192 (SVLMIDNCDS…LANLIHRPCH (190 aa)) folds into the Glutamine amidotransferase type-1 domain. Active-site residues include Cys83, His170, and Glu172.

Monomer. Heterodimer consisting of two non-identical subunits: a glutamine amidotransferase subunit (PabA) and a aminodeoxychorismate synthase subunit (PabB).

The catalysed reaction is chorismate + L-glutamine = 4-amino-4-deoxychorismate + L-glutamate. Its pathway is cofactor biosynthesis; tetrahydrofolate biosynthesis; 4-aminobenzoate from chorismate: step 1/2. Its function is as follows. Part of a heterodimeric complex that catalyzes the two-step biosynthesis of 4-amino-4-deoxychorismate (ADC), a precursor of p-aminobenzoate (PABA) and tetrahydrofolate. In the first step, a glutamine amidotransferase (PabA) generates ammonia as a substrate that, along with chorismate, is used in the second step, catalyzed by aminodeoxychorismate synthase (PabB) to produce ADC. PabA converts glutamine into glutamate only in the presence of stoichiometric amounts of PabB. The polypeptide is Aminodeoxychorismate synthase component 2 (Streptomyces lividans).